Consider the following 417-residue polypeptide: Ribulose bisphosphate carboxylase large chain (417 aa).

Residues asparagine 103 and threonine 153 each contribute to the substrate site. Lysine 155 functions as the Proton acceptor in the catalytic mechanism. Lysine 157 provides a ligand contact to substrate. Residues lysine 181, aspartate 183, and glutamate 184 each contribute to the Mg(2+) site. Lysine 181 is modified (N6-carboxylysine). Residue histidine 274 is the Proton acceptor of the active site. Substrate contacts are provided by arginine 275, histidine 307, and serine 359.

The protein belongs to the RuBisCO large chain family. Type I subfamily. Heterohexadecamer of 8 large chains and 8 small chains. Mg(2+) serves as cofactor.

The protein resides in the plastid. The protein localises to the chloroplast. The enzyme catalyses 2 (2R)-3-phosphoglycerate + 2 H(+) = D-ribulose 1,5-bisphosphate + CO2 + H2O. It catalyses the reaction D-ribulose 1,5-bisphosphate + O2 = 2-phosphoglycolate + (2R)-3-phosphoglycerate + 2 H(+). In terms of biological role, ruBisCO catalyzes two reactions: the carboxylation of D-ribulose 1,5-bisphosphate, the primary event in carbon dioxide fixation, as well as the oxidative fragmentation of the pentose substrate in the photorespiration process. Both reactions occur simultaneously and in competition at the same active site. This is Ribulose bisphosphate carboxylase large chain from Acrostichum aureum (Golden leather fern).